The primary structure comprises 168 residues: Small ribosomal subunit protein uS5 (168 aa).

The S5 DRBM domain maps to 11–74; it reads YSEKVVKIDR…EAAKKHLVKI (64 aa).

It belongs to the universal ribosomal protein uS5 family. As to quaternary structure, part of the 30S ribosomal subunit. Contacts proteins S4 and S8.

Its function is as follows. With S4 and S12 plays an important role in translational accuracy. Functionally, located at the back of the 30S subunit body where it stabilizes the conformation of the head with respect to the body. The protein is Small ribosomal subunit protein uS5 of Leptospira borgpetersenii serovar Hardjo-bovis (strain JB197).